The sequence spans 344 residues: Heat-inducible transcription repressor HrcA (344 aa).

This sequence belongs to the HrcA family.

In terms of biological role, negative regulator of class I heat shock genes (grpE-dnaK-dnaJ and groELS operons). Prevents heat-shock induction of these operons. In Streptococcus pneumoniae (strain ATCC 700669 / Spain 23F-1), this protein is Heat-inducible transcription repressor HrcA.